The chain runs to 105 residues: Met repressor (105 aa).

Belongs to the MetJ family. As to quaternary structure, homodimer.

It is found in the cytoplasm. This regulatory protein, when combined with SAM (S-adenosylmethionine) represses the expression of the methionine regulon and of enzymes involved in SAM synthesis. The protein is Met repressor of Proteus mirabilis (strain HI4320).